Here is a 464-residue protein sequence, read N- to C-terminus: Soluble pyridine nucleotide transhydrogenase (464 aa).

35–44 is an FAD binding site; the sequence is DNRPLVGGNC.

Belongs to the class-I pyridine nucleotide-disulfide oxidoreductase family. FAD serves as cofactor.

It is found in the cytoplasm. It catalyses the reaction NAD(+) + NADPH = NADH + NADP(+). Conversion of NADPH, generated by peripheral catabolic pathways, to NADH, which can enter the respiratory chain for energy generation. This is Soluble pyridine nucleotide transhydrogenase from Ectopseudomonas mendocina (strain ymp) (Pseudomonas mendocina).